Reading from the N-terminus, the 1465-residue chain is DNA polymerase III PolC-type (1465 aa).

One can recognise an Exonuclease domain in the interval 427 to 583 (YVVFDVETTG…YDAEATGRLL (157 aa)).

This sequence belongs to the DNA polymerase type-C family. PolC subfamily.

The protein resides in the cytoplasm. The catalysed reaction is DNA(n) + a 2'-deoxyribonucleoside 5'-triphosphate = DNA(n+1) + diphosphate. Its function is as follows. Required for replicative DNA synthesis. This DNA polymerase also exhibits 3' to 5' exonuclease activity. The polypeptide is DNA polymerase III PolC-type (Streptococcus pyogenes serotype M5 (strain Manfredo)).